The chain runs to 435 residues: Methylenetetrahydrofolate--tRNA-(uracil-5-)-methyltransferase TrmFO (435 aa).

9 to 14 (GAGLAG) lines the FAD pocket.

It belongs to the MnmG family. TrmFO subfamily. It depends on FAD as a cofactor.

It localises to the cytoplasm. The enzyme catalyses uridine(54) in tRNA + (6R)-5,10-methylene-5,6,7,8-tetrahydrofolate + NADH + H(+) = 5-methyluridine(54) in tRNA + (6S)-5,6,7,8-tetrahydrofolate + NAD(+). It carries out the reaction uridine(54) in tRNA + (6R)-5,10-methylene-5,6,7,8-tetrahydrofolate + NADPH + H(+) = 5-methyluridine(54) in tRNA + (6S)-5,6,7,8-tetrahydrofolate + NADP(+). Its function is as follows. Catalyzes the folate-dependent formation of 5-methyl-uridine at position 54 (M-5-U54) in all tRNAs. This Staphylococcus haemolyticus (strain JCSC1435) protein is Methylenetetrahydrofolate--tRNA-(uracil-5-)-methyltransferase TrmFO.